The following is a 134-amino-acid chain: ATP synthase epsilon chain (134 aa).

Belongs to the ATPase epsilon chain family. F-type ATPases have 2 components, CF(1) - the catalytic core - and CF(0) - the membrane proton channel. CF(1) has five subunits: alpha(3), beta(3), gamma(1), delta(1), epsilon(1). CF(0) has three main subunits: a, b and c.

Its subcellular location is the cell inner membrane. Its function is as follows. Produces ATP from ADP in the presence of a proton gradient across the membrane. This chain is ATP synthase epsilon chain, found in Solibacter usitatus (strain Ellin6076).